We begin with the raw amino-acid sequence, 277 residues long: Energy-coupling factor transporter ATP-binding protein EcfA1 (277 aa).

The ABC transporter domain maps to 5-243; the sequence is IRAQNVSFCY…VEVLKKIGLD (239 aa). Residue 42–49 coordinates ATP; that stretch reads GHNGSGKS.

It belongs to the ABC transporter superfamily. Energy-coupling factor EcfA family. In terms of assembly, forms a stable energy-coupling factor (ECF) transporter complex composed of 2 membrane-embedded substrate-binding proteins (S component), 2 ATP-binding proteins (A component) and 2 transmembrane proteins (T component).

The protein resides in the cell membrane. Its function is as follows. ATP-binding (A) component of a common energy-coupling factor (ECF) ABC-transporter complex. Unlike classic ABC transporters this ECF transporter provides the energy necessary to transport a number of different substrates. In Caldanaerobacter subterraneus subsp. tengcongensis (strain DSM 15242 / JCM 11007 / NBRC 100824 / MB4) (Thermoanaerobacter tengcongensis), this protein is Energy-coupling factor transporter ATP-binding protein EcfA1.